The following is a 341-amino-acid chain: Methionine import ATP-binding protein MetN (341 aa).

The 242-residue stretch at 6-247 (IEIKKLSKNF…PQHQATRHLL (242 aa)) folds into the ABC transporter domain. 44–51 (GMSGAGKS) is a binding site for ATP.

Belongs to the ABC transporter superfamily. Methionine importer (TC 3.A.1.24) family. In terms of assembly, the complex is composed of two ATP-binding proteins (MetN), two transmembrane proteins (MetI) and a solute-binding protein (MetQ).

It is found in the cell inner membrane. The enzyme catalyses L-methionine(out) + ATP + H2O = L-methionine(in) + ADP + phosphate + H(+). It carries out the reaction D-methionine(out) + ATP + H2O = D-methionine(in) + ADP + phosphate + H(+). Part of the ABC transporter complex MetNIQ involved in methionine import. Responsible for energy coupling to the transport system. This chain is Methionine import ATP-binding protein MetN, found in Protochlamydia amoebophila (strain UWE25).